The following is a 467-amino-acid chain: Ammonium transporter Rh type C (467 aa).

The Cytoplasmic segment spans residues methionine 1–leucine 3. A helical membrane pass occupies residues arginine 4 to valine 24. Over arginine 25–tyrosine 55 the chain is Extracellular. Asparagine 42 carries N-linked (GlcNAc...) asparagine glycosylation. A helical transmembrane segment spans residues proline 56 to leucine 76. Residues lysine 77–glycine 80 lie on the Cytoplasmic side of the membrane. The helical transmembrane segment at phenylalanine 81–methionine 101 threads the bilayer. Residues glutamine 102–serine 119 are Extracellular-facing. Residues leucine 120–glycine 139 traverse the membrane as a helical segment. Residues lysine 140–glutamine 145 are Cytoplasmic-facing. Residues isoleucine 146–leucine 168 traverse the membrane as a helical segment. At histidine 169 to alanine 173 the chain is on the extracellular side. The chain crosses the membrane as a helical span at residues glycine 174–leucine 194. At asparagine 195–aspartate 213 the chain is on the cytoplasmic side. A helical membrane pass occupies residues leucine 214 to valine 234. Topologically, residues serine 235–alanine 245 are extracellular. The chain crosses the membrane as a helical span at residues isoleucine 246–valine 266. The Cytoplasmic portion of the chain corresponds to asparagine 267 to lysine 271. A helical transmembrane segment spans residues leucine 272 to alanine 292. The Extracellular portion of the chain corresponds to glutamate 293–methionine 295. A helical membrane pass occupies residues leucine 296–phenylalanine 316. Topologically, residues threonine 317–asparagine 337 are cytoplasmic. The helical transmembrane segment at leucine 338–threonine 358 threads the bilayer. Topologically, residues glutamate 359–alanine 390 are extracellular. A helical transmembrane segment spans residues alanine 391 to leucine 411. The Cytoplasmic portion of the chain corresponds to lysine 412–lysine 467.

This sequence belongs to the ammonium transporter (TC 2.A.49) family. Rh subfamily. In terms of assembly, homotrimer.

Its subcellular location is the apical cell membrane. Functionally, functions as an ammonia transporter. This chain is Ammonium transporter Rh type C (rhcg), found in Xenopus tropicalis (Western clawed frog).